Reading from the N-terminus, the 836-residue chain is Transcription factor vrtR2 (836 aa).

Positions 1-26 are enriched in polar residues; sequence MPSLSSKTSTMQRSCRPQMSACPNQQ. The disordered stretch occupies residues 1–29; it reads MPSLSSKTSTMQRSCRPQMSACPNQQQKD. Positions 37-63 form a DNA-binding region, zn(2)-C6 fungal-type; it reads CVLCRDRKLKCDKLDPCSNCTSSGVAC. A disordered region spans residues 72 to 114; it reads PRGRHARTVQTKASTPPDTRRRGSSNESTTAPAPDDGGLGTHI. Polar residues predominate over residues 79–88; the sequence is TVQTKASTPP.

It is found in the nucleus. Functionally, probable transcription factor that regulates expression of the gene cluster that mediates the biosynthesis of viridicatumtoxin, a tetracycline-like fungal meroterpenoid with a unique, fused spirobicyclic ring system. This chain is Transcription factor vrtR2, found in Penicillium aethiopicum.